Here is a 112-residue protein sequence, read N- to C-terminus: uncharacterized protein (112 aa).

2 consecutive transmembrane segments (helical) span residues 55 to 75 (LLEI…PTLF) and 91 to 111 (LIML…LLLL).

The protein localises to the membrane. This is an uncharacterized protein from Saccharomyces cerevisiae (strain ATCC 204508 / S288c) (Baker's yeast).